The following is a 65-amino-acid chain: Crotamine CRO1 (65 aa).

The first 22 residues, 1 to 22 (MKILYLLFAFLFLAFLSEPGNA), serve as a signal peptide directing secretion. Intrachain disulfides connect C26-C58, C33-C52, and C40-C59.

The protein belongs to the crotamine-myotoxin family. In terms of assembly, monomer. In terms of tissue distribution, expressed by the venom gland.

It localises to the secreted. Cationic peptide that possesses multiple functions. It acts as a cell-penetrating peptide (CPP), and as a potent voltage-gated potassium channel (Kv) inhibitor. It exhibits antimicrobial activities, hind limb paralysis, and severe muscle necrosis by a non-enzymatic mechanism. This is Crotamine CRO1 (CRO1) from Crotalus durissus terrificus (South American rattlesnake).